We begin with the raw amino-acid sequence, 233 residues long: Guanylate kinase (233 aa).

The Guanylate kinase-like domain maps to 3-184 (GTIFIISAPS…AVEQLRAIVL (182 aa)). Position 10–17 (10–17 (APSGSGKS)) interacts with ATP.

Belongs to the guanylate kinase family.

It is found in the cytoplasm. It carries out the reaction GMP + ATP = GDP + ADP. Its function is as follows. Essential for recycling GMP and indirectly, cGMP. The polypeptide is Guanylate kinase (Koribacter versatilis (strain Ellin345)).